A 312-amino-acid polypeptide reads, in one-letter code: Olfactory receptor 1J21 (312 aa).

A run of 7 helical transmembrane segments spans residues 29–49, 58–78, 95–115, 143–163, 197–217, 241–261, and 272–292; these read ALFLAMYLTTVLGNLLIILLI, PMYFFLSHLAFTDISFSSVTA, AGCVSQIYFFLLFGCIDNFLL, LLVMVSWAFSSSNGLVHTLLF, LVILTLAVVVITVPFICILVS, CGSHLCVVSLYYGAIIGLYFF, and VIVAVLYTVVTPMLNPFIYSL.

The protein belongs to the G-protein coupled receptor 1 family.

The protein localises to the cell membrane. Its function is as follows. Odorant receptor. Activated by (+) and (-)-carvone. The sequence is that of Olfactory receptor 1J21 from Mus musculus (Mouse).